We begin with the raw amino-acid sequence, 301 residues long: Acetylglutamate kinase (301 aa).

Substrate contacts are provided by residues 71–72 (GG), arginine 93, and asparagine 198.

Belongs to the acetylglutamate kinase family. ArgB subfamily.

The protein resides in the cytoplasm. It carries out the reaction N-acetyl-L-glutamate + ATP = N-acetyl-L-glutamyl 5-phosphate + ADP. It participates in amino-acid biosynthesis; L-arginine biosynthesis; N(2)-acetyl-L-ornithine from L-glutamate: step 2/4. Catalyzes the ATP-dependent phosphorylation of N-acetyl-L-glutamate. This is Acetylglutamate kinase from Zymomonas mobilis subsp. mobilis (strain ATCC 31821 / ZM4 / CP4).